The primary structure comprises 736 residues: Catalase-peroxidase (736 aa).

The first 21 residues, 1 to 21, serve as a signal peptide directing secretion; sequence MFKKTILSFVISAVMVTAASA. Positions 102-224 form a cross-link, tryptophyl-tyrosyl-methioninium (Trp-Tyr) (with M-250); it reads WHAAGTYRTH…LAAVEMGLIY (123 aa). Residue His-103 is the Proton acceptor of the active site. Residues 224-250 constitute a cross-link (tryptophyl-tyrosyl-methioninium (Tyr-Met) (with W-102)); sequence YVNPVGPHGNPDPLLAANDIRMSFGRM. His-265 serves as a coordination point for heme b.

Belongs to the peroxidase family. Peroxidase/catalase subfamily. In terms of assembly, homodimer or homotetramer. The cofactor is heme b. In terms of processing, formation of the three residue Trp-Tyr-Met cross-link is important for the catalase, but not the peroxidase activity of the enzyme.

The enzyme catalyses H2O2 + AH2 = A + 2 H2O. It catalyses the reaction 2 H2O2 = O2 + 2 H2O. Functionally, bifunctional enzyme with both catalase and broad-spectrum peroxidase activity. The polypeptide is Catalase-peroxidase (Shewanella woodyi (strain ATCC 51908 / MS32)).